We begin with the raw amino-acid sequence, 101 residues long: Interleukin-8 (101 aa).

The first 22 residues, 1–22 (MTSKLAIALLAAFLLSAALCKA), serve as a signal peptide directing secretion. Arg-27 is modified (citrulline). Cystine bridges form between Cys-34/Cys-61 and Cys-36/Cys-77.

This sequence belongs to the intercrine alpha (chemokine CxC) family. In terms of assembly, homodimer. In terms of processing, citrullination at Arg-27 prevents proteolysis, and dampens tissue inflammation, it also enhances leukocytosis, possibly through impaired chemokine clearance from the blood circulation.

The protein resides in the secreted. Chemotactic factor that mediates inflammatory response by attracting neutrophils, basophils, and T-cells to clear pathogens and protect the host from infection. Also plays an important role in neutrophil activation. Released in response to an inflammatory stimulus, exerts its effect by binding to the G-protein-coupled receptors CXCR1 and CXCR2, primarily found in neutrophils, monocytes and endothelial cells. G-protein heterotrimer (alpha, beta, gamma subunits) constitutively binds to CXCR1/CXCR2 receptor and activation by IL8 leads to beta and gamma subunits release from Galpha (GNAI2 in neutrophils) and activation of several downstream signaling pathways including PI3K and MAPK pathways. The chain is Interleukin-8 (CXCL8) from Tursiops truncatus (Atlantic bottle-nosed dolphin).